Here is a 337-residue protein sequence, read N- to C-terminus: DNA-directed RNA polymerase subunit alpha (337 aa).

Residues 1–233 form an alpha N-terminal domain (alpha-NTD) region; that stretch reads MIREKVTVST…DLFIPFLHME (233 aa). The alpha C-terminal domain (alpha-CTD) stretch occupies residues 266–337; the sequence is KLALKSIFID…FAIDLPKNQF (72 aa).

The protein belongs to the RNA polymerase alpha chain family. In terms of assembly, in plastids the minimal PEP RNA polymerase catalytic core is composed of four subunits: alpha, beta, beta', and beta''. When a (nuclear-encoded) sigma factor is associated with the core the holoenzyme is formed, which can initiate transcription.

Its subcellular location is the plastid. It localises to the chloroplast. It carries out the reaction RNA(n) + a ribonucleoside 5'-triphosphate = RNA(n+1) + diphosphate. Its function is as follows. DNA-dependent RNA polymerase catalyzes the transcription of DNA into RNA using the four ribonucleoside triphosphates as substrates. This is DNA-directed RNA polymerase subunit alpha from Ipomoea purpurea (Common morning glory).